The sequence spans 490 residues: Betaine aldehyde dehydrogenase (490 aa).

Residue asparagine 93 coordinates K(+). 150 to 152 (GAW) is an NAD(+) binding site. The active-site Charge relay system is the lysine 162. Position 176–179 (176–179 (KPSE)) interacts with NAD(+). Valine 180 contacts K(+). Position 230–233 (230–233 (GTAT)) interacts with NAD(+). Leucine 246 serves as a coordination point for K(+). Catalysis depends on glutamate 252, which acts as the Proton acceptor. The NAD(+) site is built by glycine 254, cysteine 286, and glutamate 387. Residue cysteine 286 is the Nucleophile of the active site. Cysteine sulfenic acid (-SOH) is present on cysteine 286. Residues lysine 457 and glycine 460 each contribute to the K(+) site. Glutamate 464 serves as the catalytic Charge relay system.

Belongs to the aldehyde dehydrogenase family. In terms of assembly, dimer of dimers. The cofactor is K(+).

The enzyme catalyses betaine aldehyde + NAD(+) + H2O = glycine betaine + NADH + 2 H(+). The protein operates within amine and polyamine biosynthesis; betaine biosynthesis via choline pathway; betaine from betaine aldehyde: step 1/1. Functionally, involved in the biosynthesis of the osmoprotectant glycine betaine. Catalyzes the irreversible oxidation of betaine aldehyde to the corresponding acid. The polypeptide is Betaine aldehyde dehydrogenase (Xanthomonas euvesicatoria pv. vesicatoria (strain 85-10) (Xanthomonas campestris pv. vesicatoria)).